The following is a 346-amino-acid chain: Leucine zipper protein 2 (346 aa).

A signal peptide spans 1–19; the sequence is MKFSPAHYLLPLLPALVLS. A coiled-coil region spans residues 16-211; it reads LVLSTRQDYE…QMKAMKETVQ (196 aa). N-linked (GlcNAc...) asparagine glycosylation is present at asparagine 133. A leucine-zipper region spans residues 164 to 192; the sequence is LRYGKKDLLFKAQQLTDLEQKLAVAKNEL. 2 disordered regions span residues 221-240 and 248-346; these read QPPP…LLPP and PDAA…EKIL. Residues 250-261 show a composition bias toward low complexity; that stretch reads AAAKSKPQQSAS. The segment covering 262 to 283 has biased composition (polar residues); it reads GNNESSQVESTKEGNPSTTACD. Asparagine 264 is a glycosylation site (N-linked (GlcNAc...) asparagine). Residues 286 to 298 are compositionally biased toward basic and acidic residues; it reads DEGRPCSMKHKES. N-linked (GlcNAc...) asparagine glycosylation is present at asparagine 302.

Its subcellular location is the secreted. The sequence is that of Leucine zipper protein 2 (LUZP2) from Homo sapiens (Human).